A 391-amino-acid polypeptide reads, in one-letter code: Alkanesulfonate monooxygenase (391 aa).

The protein belongs to the SsuD family.

The enzyme catalyses an alkanesulfonate + FMNH2 + O2 = an aldehyde + FMN + sulfite + H2O + 2 H(+). Functionally, catalyzes the desulfonation of aliphatic sulfonates. This is Alkanesulfonate monooxygenase from Paracidovorax citrulli (strain AAC00-1) (Acidovorax citrulli).